The chain runs to 85 residues: Large ribosomal subunit protein bL27 (85 aa).

Residues 1–20 (MATKKAGGSTRNGRDSEAKR) form a disordered region.

Belongs to the bacterial ribosomal protein bL27 family.

This is Large ribosomal subunit protein bL27 from Histophilus somni (strain 129Pt) (Haemophilus somnus).